The primary structure comprises 435 residues: Palmitoyltransferase pfa4 (435 aa).

Residues 1 to 10 are Cytoplasmic-facing; sequence MLCSSFSVSR. The helical transmembrane segment at 11–31 threads the bilayer; it reads LAIPAVCILIAFLAYTSQIFF. Residues 32–48 are Lumenal-facing; sequence LYFEDAPLKEDEVWRIN. A helical membrane pass occupies residues 49–69; that stretch reads ILAICIWICYYRACTVDPGHV. The Cytoplasmic portion of the chain corresponds to 70-129; the sequence is PKGWMPSDRERLKADRASGRQRWCRRCEAYKPPRAHHCKTCERCVPKMDHHCPWTSNCVS. The region spanning 91–141 is the DHHC domain; sequence RWCRRCEAYKPPRAHHCKTCERCVPKMDHHCPWTSNCVSHFTFPHFARFLF. Catalysis depends on Cys-121, which acts as the S-palmitoyl cysteine intermediate. The helical transmembrane segment at 130 to 150 threads the bilayer; that stretch reads HFTFPHFARFLFYAVVGIAYL. Residues 151 to 179 lie on the Lumenal side of the membrane; sequence ETRLWQRVSKVWGSRHLPSYLGPSMGQIG. A helical transmembrane segment spans residues 180–200; the sequence is HLFVLFVTNSLTLFALSLLLL. The Cytoplasmic portion of the chain corresponds to 201-435; the sequence is RTLWSLGSNT…QRAKRQHLSQ (235 aa). Positions 359 to 368 are enriched in basic and acidic residues; sequence RKPFHVRLEE. The disordered stretch occupies residues 359 to 408; sequence RKPFHVRLEEYSNGSSDAEADTGSDDDSDHGEEGWKNSEGERLRDFGVDE. Residues 376–388 show a composition bias toward acidic residues; sequence AEADTGSDDDSDH. Residues 389–405 show a composition bias toward basic and acidic residues; that stretch reads GEEGWKNSEGERLRDFG.

Belongs to the DHHC palmitoyltransferase family. PFA4 subfamily.

The protein localises to the endoplasmic reticulum membrane. The enzyme catalyses L-cysteinyl-[protein] + hexadecanoyl-CoA = S-hexadecanoyl-L-cysteinyl-[protein] + CoA. In terms of biological role, mediates the reversible addition of palmitate to target proteins, thereby regulating their membrane association and biological function. The protein is Palmitoyltransferase pfa4 of Emericella nidulans (strain FGSC A4 / ATCC 38163 / CBS 112.46 / NRRL 194 / M139) (Aspergillus nidulans).